A 149-amino-acid polypeptide reads, in one-letter code: Protein-export protein SecB (149 aa).

This sequence belongs to the SecB family. In terms of assembly, homotetramer, a dimer of dimers. One homotetramer interacts with 1 SecA dimer.

The protein localises to the cytoplasm. In terms of biological role, one of the proteins required for the normal export of preproteins out of the cell cytoplasm. It is a molecular chaperone that binds to a subset of precursor proteins, maintaining them in a translocation-competent state. It also specifically binds to its receptor SecA. The protein is Protein-export protein SecB of Hydrogenovibrio crunogenus (strain DSM 25203 / XCL-2) (Thiomicrospira crunogena).